We begin with the raw amino-acid sequence, 147 residues long: Putative pre-16S rRNA nuclease (147 aa).

Belongs to the YqgF nuclease family.

The protein resides in the cytoplasm. Its function is as follows. Could be a nuclease involved in processing of the 5'-end of pre-16S rRNA. In Ligilactobacillus salivarius (strain UCC118) (Lactobacillus salivarius), this protein is Putative pre-16S rRNA nuclease.